The chain runs to 708 residues: Matrix metalloproteinase-9 (708 aa).

Residues 1 to 19 (MSPWQPLLLVLLALGYSFA) form the signal peptide. Positions 20-107 (APHQRQPTYV…PRCGVPDVGK (88 aa)) are cleaved as a propeptide — activation peptide. A glycan (N-linked (GlcNAc...) asparagine) is linked at asparagine 39. The short motif at 98-105 (PRCGVPDV) is the Cysteine switch element. Position 100 (cysteine 100) interacts with Zn(2+). Asparagine 121 is a glycosylation site (N-linked (GlcNAc...) asparagine). Ca(2+)-binding residues include aspartate 132 and aspartate 166. Histidine 176 and aspartate 178 together coordinate Zn(2+). Ca(2+) contacts are provided by aspartate 183, glycine 184, aspartate 186, and leucine 188. Histidine 191 lines the Zn(2+) pocket. Ca(2+)-binding residues include glycine 198, glutamine 200, and aspartate 202. Histidine 204 provides a ligand contact to Zn(2+). Positions 206, 207, and 209 each coordinate Ca(2+). Fibronectin type-II domains follow at residues 226–274 (ANGA…FCPS), 284–332 (GDGK…FCPT), and 343–391 (SAGE…FCPD). Disulfide bonds link cysteine 231/cysteine 257, cysteine 245/cysteine 272, cysteine 289/cysteine 315, cysteine 303/cysteine 330, cysteine 348/cysteine 374, and cysteine 362/cysteine 389. Zn(2+) is bound at residue histidine 402. Residue glutamate 403 is part of the active site. Residues histidine 406 and histidine 412 each coordinate Zn(2+). The tract at residues 441 to 520 (HHLYGRGSKP…SSTPDDNPCN (80 aa)) is disordered. Residues 480–490 (PTGGPTVAPTG) show a composition bias toward low complexity. Residues 491-502 (APSPGPTGPPTA) show a composition bias toward pro residues. An intrachain disulfide couples cysteine 519 to cysteine 707. Hemopexin repeat units follow at residues 521–566 (VDVF…WPAF), 567–611 (PSKL…GLGS), 613–660 (VTLV…FSGV), and 661–707 (PWNS…LLQC).

The protein belongs to the peptidase M10A family. Exists as monomer or homodimer; disulfide-linked. Also exists as heterodimer with LCN2. Macrophages and transformed cell lines produce only the monomeric form. Interacts with ECM1. Zn(2+) serves as cofactor. Ca(2+) is required as a cofactor. In terms of processing, N- and O-glycosylated.

Its subcellular location is the secreted. It is found in the extracellular space. The protein resides in the extracellular matrix. The catalysed reaction is Cleavage of gelatin types I and V and collagen types IV and V.. Functionally, matrix metalloproteinase that plays an essential role in local proteolysis of the extracellular matrix and in leukocyte migration. Could play a role in bone osteoclastic resorption. Cleaves KiSS1 at a Gly-|-Leu bond. Cleaves NINJ1 to generate the Secreted ninjurin-1 form. Cleaves type IV and type V collagen into large C-terminal three quarter fragments and shorter N-terminal one quarter fragments. Degrades fibronectin but not laminin or Pz-peptide. The protein is Matrix metalloproteinase-9 (Mmp9) of Rattus norvegicus (Rat).